The primary structure comprises 138 residues: Endoribonuclease YbeY (138 aa).

Positions 105, 109, and 115 each coordinate Zn(2+).

It belongs to the endoribonuclease YbeY family. It depends on Zn(2+) as a cofactor.

The protein localises to the cytoplasm. In terms of biological role, single strand-specific metallo-endoribonuclease involved in late-stage 70S ribosome quality control and in maturation of the 3' terminus of the 16S rRNA. The polypeptide is Endoribonuclease YbeY (Chlorobium phaeobacteroides (strain BS1)).